Here is a 579-residue protein sequence, read N- to C-terminus: XK-related protein 7 (579 aa).

The span at 1–18 shows a compositional bias: low complexity; it reads MAAKSDGAAASAGPDPEG. Positions 1 to 40 are disordered; sequence MAAKSDGAAASAGPDPEGAAGGARGSAGGRGEAAAAAGPP. The span at 19–31 shows a compositional bias: gly residues; it reads AAGGARGSAGGRG. The next 2 membrane-spanning stretches (helical) occupy residues 59 to 79 and 89 to 109; these read WVLC…WLAA and YFSL…LLSF. A disordered region spans residues 146-165; it reads GAFRTKEGSPEPGPQPAPSS. The next 5 helical transmembrane spans lie at 260–280, 314–334, 355–375, 384–404, and 415–435; these read LLPA…LASY, GLAF…CIVG, GEEI…WFNV, MTLY…FWYS, and LIMV…MCVY. The disordered stretch occupies residues 466–510; the sequence is ADAITSPPRSLPRTTGAERDGASAGERAGTPTPPVFQVRPGLPPT.

Belongs to the XK family.

It is found in the cell membrane. This is XK-related protein 7 (XKR7) from Pan troglodytes (Chimpanzee).